Here is a 188-residue protein sequence, read N- to C-terminus: dCTP deaminase, dUMP-forming (188 aa).

DCTP-binding positions include 101 to 106 (KSSLGR), D119, 127 to 129 (TLE), Q148, Y162, and Q174. E129 (proton donor/acceptor) is an active-site residue.

It belongs to the dCTP deaminase family. As to quaternary structure, homotrimer.

It carries out the reaction dCTP + 2 H2O = dUMP + NH4(+) + diphosphate. It functions in the pathway pyrimidine metabolism; dUMP biosynthesis; dUMP from dCTP: step 1/1. Its function is as follows. Bifunctional enzyme that catalyzes both the deamination of dCTP to dUTP and the hydrolysis of dUTP to dUMP without releasing the toxic dUTP intermediate. This is dCTP deaminase, dUMP-forming from Corynebacterium jeikeium (strain K411).